Reading from the N-terminus, the 229-residue chain is Urease accessory protein UreG (229 aa).

The span at 1 to 15 (MPPHFIDGEPHDHQH) shows a compositional bias: basic and acidic residues. Residues 1–20 (MPPHFIDGEPHDHQHDRPRR) are disordered. 34–41 (GPVGSGKT) is a GTP binding site.

The protein belongs to the SIMIBI class G3E GTPase family. UreG subfamily. Homodimer. UreD, UreF and UreG form a complex that acts as a GTP-hydrolysis-dependent molecular chaperone, activating the urease apoprotein by helping to assemble the nickel containing metallocenter of UreC. The UreE protein probably delivers the nickel.

It is found in the cytoplasm. Functionally, facilitates the functional incorporation of the urease nickel metallocenter. This process requires GTP hydrolysis, probably effectuated by UreG. The sequence is that of Urease accessory protein UreG from Rhodococcus jostii (strain RHA1).